The primary structure comprises 1396 residues: DNA-directed RNA polymerase subunit beta' (1396 aa).

C70, C72, C85, and C88 together coordinate Zn(2+). Residues D460, D462, and D464 each contribute to the Mg(2+) site. 4 residues coordinate Zn(2+): C807, C881, C888, and C891. A compositionally biased stretch (acidic residues) spans 1361–1378 (EPEEIEEPVPEDLEDETA). The tract at residues 1361-1396 (EPEEIEEPVPEDLEDETAGADSAQAASEESVAEGKD) is disordered. Positions 1379–1389 (GADSAQAASEE) are enriched in low complexity.

Belongs to the RNA polymerase beta' chain family. In terms of assembly, the RNAP catalytic core consists of 2 alpha, 1 beta, 1 beta' and 1 omega subunit. When a sigma factor is associated with the core the holoenzyme is formed, which can initiate transcription. Requires Mg(2+) as cofactor. Zn(2+) is required as a cofactor.

It carries out the reaction RNA(n) + a ribonucleoside 5'-triphosphate = RNA(n+1) + diphosphate. In terms of biological role, DNA-dependent RNA polymerase catalyzes the transcription of DNA into RNA using the four ribonucleoside triphosphates as substrates. In Syntrophotalea carbinolica (strain DSM 2380 / NBRC 103641 / GraBd1) (Pelobacter carbinolicus), this protein is DNA-directed RNA polymerase subunit beta'.